Consider the following 214-residue polypeptide: Cell division protein SepF (214 aa).

Positions E25 to G51 are disordered.

The protein belongs to the SepF family. In terms of assembly, homodimer. Interacts with FtsZ.

Its subcellular location is the cytoplasm. In terms of biological role, cell division protein that is part of the divisome complex and is recruited early to the Z-ring. Probably stimulates Z-ring formation, perhaps through the cross-linking of FtsZ protofilaments. Its function overlaps with FtsA. This chain is Cell division protein SepF, found in Mycolicibacterium smegmatis (strain ATCC 700084 / mc(2)155) (Mycobacterium smegmatis).